Reading from the N-terminus, the 447-residue chain is GTPase Era, mitochondrial (447 aa).

The N-terminal 18 residues, 1 to 18, are a transit peptide targeting the mitochondrion; it reads MTLRSCETFLRRSLRFST. The 232-residue stretch at 109 to 340 folds into the Era-type G domain; that stretch reads KSLKVAIVGS…RYLFVAAKPC (232 aa). The tract at residues 117–124 is G1; the sequence is GSPNAGKS. 117 to 124 provides a ligand contact to GTP; the sequence is GSPNAGKS. Positions 143-147 are G2; it reads HTTRS. Residues 164-167 are G3; the sequence is DTPG. GTP contacts are provided by residues 164-168 and 233-236; these read DTPGL and NKVD. The tract at residues 233–236 is G4; it reads NKVD. The interval 318 to 320 is G5; sequence LSS. The KH type-2 domain occupies 370–447; that stretch reads LPKEVPYTMT…RLKISVKLRK (78 aa).

It belongs to the TRAFAC class TrmE-Era-EngA-EngB-Septin-like GTPase superfamily. Era GTPase family.

The protein resides in the mitochondrion matrix. Its subcellular location is the mitochondrion inner membrane. In terms of biological role, probable GTPase that plays a role in the mitochondrial ribosomal small subunit assembly. Specifically binds the 12S mitochondrial rRNA (12S mt-rRNA) to a 33 nucleotide section delineating the 3' terminal stem-loop region. May act as a chaperone that protects the 12S mt-rRNA on the 28S mitoribosomal subunit during ribosomal small subunit assembly. The chain is GTPase Era, mitochondrial (eral1) from Danio rerio (Zebrafish).